Consider the following 160-residue polypeptide: 6,7-dimethyl-8-ribityllumazine synthase (160 aa).

5-amino-6-(D-ribitylamino)uracil-binding positions include F22, 57 to 59, and 81 to 83; these read TYE and TII. 86–87 lines the (2S)-2-hydroxy-3-oxobutyl phosphate pocket; sequence QT. The active-site Proton donor is H89. L114 provides a ligand contact to 5-amino-6-(D-ribitylamino)uracil. Position 128 (R128) interacts with (2S)-2-hydroxy-3-oxobutyl phosphate.

The protein belongs to the DMRL synthase family. As to quaternary structure, forms an icosahedral capsid composed of 60 subunits, arranged as a dodecamer of pentamers.

The catalysed reaction is (2S)-2-hydroxy-3-oxobutyl phosphate + 5-amino-6-(D-ribitylamino)uracil = 6,7-dimethyl-8-(1-D-ribityl)lumazine + phosphate + 2 H2O + H(+). Its pathway is cofactor biosynthesis; riboflavin biosynthesis; riboflavin from 2-hydroxy-3-oxobutyl phosphate and 5-amino-6-(D-ribitylamino)uracil: step 1/2. Functionally, catalyzes the formation of 6,7-dimethyl-8-ribityllumazine by condensation of 5-amino-6-(D-ribitylamino)uracil with 3,4-dihydroxy-2-butanone 4-phosphate. This is the penultimate step in the biosynthesis of riboflavin. The sequence is that of 6,7-dimethyl-8-ribityllumazine synthase from Buchnera aphidicola subsp. Acyrthosiphon pisum (strain Tuc7).